The chain runs to 335 residues: Holliday junction branch migration complex subunit RuvB (335 aa).

Residues 1 to 183 (MDERIISSET…FGVIDHLEFY (183 aa)) are large ATPase domain (RuvB-L). ATP-binding positions include Leu-22, Arg-23, Gly-64, Lys-67, Thr-68, Thr-69, 130–132 (EDY), Arg-173, Tyr-183, and Arg-220. Thr-68 is a binding site for Mg(2+). The interval 184–254 (TEEQLTEIVL…LAKEALTLLQ (71 aa)) is small ATPAse domain (RuvB-S). The head domain (RuvB-H) stretch occupies residues 257–335 (PRGLDTIDQK…HLGISYEKEV (79 aa)). Residues Arg-293, Arg-312, and Arg-317 each contribute to the DNA site.

Belongs to the RuvB family. Homohexamer. Forms an RuvA(8)-RuvB(12)-Holliday junction (HJ) complex. HJ DNA is sandwiched between 2 RuvA tetramers; dsDNA enters through RuvA and exits via RuvB. An RuvB hexamer assembles on each DNA strand where it exits the tetramer. Each RuvB hexamer is contacted by two RuvA subunits (via domain III) on 2 adjacent RuvB subunits; this complex drives branch migration. In the full resolvosome a probable DNA-RuvA(4)-RuvB(12)-RuvC(2) complex forms which resolves the HJ.

Its subcellular location is the cytoplasm. The enzyme catalyses ATP + H2O = ADP + phosphate + H(+). The RuvA-RuvB-RuvC complex processes Holliday junction (HJ) DNA during genetic recombination and DNA repair, while the RuvA-RuvB complex plays an important role in the rescue of blocked DNA replication forks via replication fork reversal (RFR). RuvA specifically binds to HJ cruciform DNA, conferring on it an open structure. The RuvB hexamer acts as an ATP-dependent pump, pulling dsDNA into and through the RuvAB complex. RuvB forms 2 homohexamers on either side of HJ DNA bound by 1 or 2 RuvA tetramers; 4 subunits per hexamer contact DNA at a time. Coordinated motions by a converter formed by DNA-disengaged RuvB subunits stimulates ATP hydrolysis and nucleotide exchange. Immobilization of the converter enables RuvB to convert the ATP-contained energy into a lever motion, pulling 2 nucleotides of DNA out of the RuvA tetramer per ATP hydrolyzed, thus driving DNA branch migration. The RuvB motors rotate together with the DNA substrate, which together with the progressing nucleotide cycle form the mechanistic basis for DNA recombination by continuous HJ branch migration. Branch migration allows RuvC to scan DNA until it finds its consensus sequence, where it cleaves and resolves cruciform DNA. The protein is Holliday junction branch migration complex subunit RuvB of Listeria monocytogenes serovar 1/2a (strain ATCC BAA-679 / EGD-e).